The sequence spans 267 residues: NAD kinase 2 (267 aa).

Residue Asp-52 is the Proton acceptor of the active site. NAD(+) contacts are provided by residues 52 to 53 (DA), 124 to 125 (NE), Arg-151, Asp-153, 164 to 169 (TAYNKS), and Ala-188.

The protein belongs to the NAD kinase family. The cofactor is a divalent metal cation.

The protein resides in the cytoplasm. It catalyses the reaction NAD(+) + ATP = ADP + NADP(+) + H(+). Involved in the regulation of the intracellular balance of NAD and NADP, and is a key enzyme in the biosynthesis of NADP. Catalyzes specifically the phosphorylation on 2'-hydroxyl of the adenosine moiety of NAD to yield NADP. This is NAD kinase 2 from Bacillus cereus (strain ATCC 10987 / NRS 248).